A 207-amino-acid polypeptide reads, in one-letter code: Large ribosomal subunit protein uL4 (207 aa).

Residues 49–78 form a disordered region; sequence HAVKNRSAVSGGGRKPWRQKGTGRARQGSI.

Belongs to the universal ribosomal protein uL4 family. In terms of assembly, part of the 50S ribosomal subunit.

One of the primary rRNA binding proteins, this protein initially binds near the 5'-end of the 23S rRNA. It is important during the early stages of 50S assembly. It makes multiple contacts with different domains of the 23S rRNA in the assembled 50S subunit and ribosome. Functionally, forms part of the polypeptide exit tunnel. In Streptococcus thermophilus (strain CNRZ 1066), this protein is Large ribosomal subunit protein uL4.